Reading from the N-terminus, the 155-residue chain is Small ribosomal subunit protein uS7 (155 aa).

Belongs to the universal ribosomal protein uS7 family. In terms of assembly, part of the 30S ribosomal subunit. Contacts proteins S9 and S11.

One of the primary rRNA binding proteins, it binds directly to 16S rRNA where it nucleates assembly of the head domain of the 30S subunit. Is located at the subunit interface close to the decoding center, probably blocks exit of the E-site tRNA. The sequence is that of Small ribosomal subunit protein uS7 from Mesoplasma florum (strain ATCC 33453 / NBRC 100688 / NCTC 11704 / L1) (Acholeplasma florum).